A 365-amino-acid polypeptide reads, in one-letter code: Hematopoietic SH2 domain-containing protein homolog (365 aa).

Residues 34-125 (WFHGIISRKA…PYNELLTVAC (92 aa)) form the SH2 domain. Disordered regions lie at residues 199–278 (QSTD…QQKP) and 335–365 (AEHPISDGIPKSSDRNLPVEYRHPPPFAPGY). A compositionally biased stretch (polar residues) spans 257–277 (QQITPNTPNEGRTQQKNQQQK).

May be an adapter protein involved in tyrosine kinase signaling. This is Hematopoietic SH2 domain-containing protein homolog (hsh2d) from Danio rerio (Zebrafish).